The sequence spans 260 residues: Snake venom serine protease Dav-X (260 aa).

The N-terminal stretch at 1–18 (MVLIRVLANLLILQLSYA) is a signal peptide. Residues 19–24 (QKSSEL) constitute a propeptide that is removed on maturation. The Peptidase S1 domain maps to 25–251 (VIGGVECDIN…YTDWIQNIIA (227 aa)). Disulfide bonds link Cys31-Cys165, Cys52-Cys68, Cys102-Cys258, Cys144-Cys212, Cys176-Cys191, and Cys202-Cys227. The Charge relay system role is filled by His67. A glycan (N-linked (GlcNAc...) asparagine) is linked at Asn81. Asp112 (charge relay system) is an active-site residue. N-linked (GlcNAc...) asparagine glycans are attached at residues Asn124 and Asn172. The active-site Charge relay system is the Ser206. Asn241 carries N-linked (GlcNAc...) asparagine glycosylation.

The protein belongs to the peptidase S1 family. Snake venom subfamily. As to quaternary structure, monomer. As to expression, expressed by the venom gland.

It localises to the secreted. In terms of biological role, snake venom serine protease that may act in the hemostasis system of the prey. The polypeptide is Snake venom serine protease Dav-X (Deinagkistrodon acutus (Hundred-pace snake)).